A 162-amino-acid chain; its full sequence is Solute carrier family 2, facilitated glucose transporter member 4 (162 aa).

Topologically, residues 1–13 are extracellular; that stretch reads TSIFETAGVGQPA. The helical transmembrane segment at 14–34 threads the bilayer; sequence YATIGAGVVNTVFTLVSVFLV. Position 23 (asparagine 23) interacts with D-glucose. Over 35–43 the chain is Cytoplasmic; it reads ERAGRRTLH. Residues 44–64 traverse the membrane as a helical segment; it reads LLGLAGMCGCAILMTIALLLL. Over 65-75 the chain is Extracellular; sequence ERLPAMSYVSI. The chain crosses the membrane as a helical span at residues 76–96; sequence VAIFGFVAFFEIGPGPIPWFI. The D-glucose site is built by glutamate 86 and tryptophan 94. Residues 97-107 are Cytoplasmic-facing; the sequence is VAELFSQGPRP. The helical transmembrane segment at 108 to 128 threads the bilayer; sequence AAMAVAGFCNWTSNFIIGMGF. At 129–135 the chain is on the extracellular side; the sequence is QYIAXAM. A helical membrane pass occupies residues 136-156; the sequence is GPYVFLLFAVLLLAFFIFTFL. The Cytoplasmic segment spans residues 157 to 162; the sequence is KVPETR.

This sequence belongs to the major facilitator superfamily. Sugar transporter (TC 2.A.1.1) family. Glucose transporter subfamily. In terms of assembly, binds to DAXX. Interacts via its N-terminus with SRFBP1. Interacts with NDUFA9. Interacts with TRARG1; the interaction is required for proper SLC2A4 recycling after insulin stimulation. Sumoylated. Post-translationally, palmitoylated. Palmitoylation by ZDHHC7 controls the insulin-dependent translocation of GLUT4 to the plasma membrane.

It localises to the cell membrane. Its subcellular location is the endomembrane system. The protein resides in the cytoplasm. It is found in the perinuclear region. The enzyme catalyses D-glucose(out) = D-glucose(in). In terms of biological role, insulin-regulated facilitative glucose transporter, which plays a key role in removal of glucose from circulation. Response to insulin is regulated by its intracellular localization: in the absence of insulin, it is efficiently retained intracellularly within storage compartments in muscle and fat cells. Upon insulin stimulation, translocates from these compartments to the cell surface where it transports glucose from the extracellular milieu into the cell. The chain is Solute carrier family 2, facilitated glucose transporter member 4 from Canis lupus familiaris (Dog).